The sequence spans 57 residues: Putative secreted protein MT0250 (57 aa).

An N-terminal signal peptide occupies residues 1 to 32 (MNRIVAPAAASVVVGLLLGAAAIFGVTLMVQQ). The interval 34-57 (KKPPLPGGDPSSSVLNRVEYGNRS) is disordered.

In Mycobacterium tuberculosis (strain CDC 1551 / Oshkosh), this protein is Putative secreted protein MT0250.